The primary structure comprises 382 residues: Queuine tRNA-ribosyltransferase (382 aa).

Residue aspartate 93 is the Proton acceptor of the active site. Residues aspartate 93–phenylalanine 97, aspartate 147, glutamine 191, and glycine 218 each bind substrate. The tract at residues glycine 249 to aspartate 255 is RNA binding. Aspartate 268 functions as the Nucleophile in the catalytic mechanism. An RNA binding; important for wobble base 34 recognition region spans residues threonine 273–arginine 277. Zn(2+) is bound by residues cysteine 306, cysteine 308, cysteine 311, and histidine 337.

The protein belongs to the queuine tRNA-ribosyltransferase family. In terms of assembly, homodimer. Within each dimer, one monomer is responsible for RNA recognition and catalysis, while the other monomer binds to the replacement base PreQ1. Zn(2+) serves as cofactor.

It catalyses the reaction 7-aminomethyl-7-carbaguanine + guanosine(34) in tRNA = 7-aminomethyl-7-carbaguanosine(34) in tRNA + guanine. It participates in tRNA modification; tRNA-queuosine biosynthesis. Its function is as follows. Catalyzes the base-exchange of a guanine (G) residue with the queuine precursor 7-aminomethyl-7-deazaguanine (PreQ1) at position 34 (anticodon wobble position) in tRNAs with GU(N) anticodons (tRNA-Asp, -Asn, -His and -Tyr). Catalysis occurs through a double-displacement mechanism. The nucleophile active site attacks the C1' of nucleotide 34 to detach the guanine base from the RNA, forming a covalent enzyme-RNA intermediate. The proton acceptor active site deprotonates the incoming PreQ1, allowing a nucleophilic attack on the C1' of the ribose to form the product. After dissociation, two additional enzymatic reactions on the tRNA convert PreQ1 to queuine (Q), resulting in the hypermodified nucleoside queuosine (7-(((4,5-cis-dihydroxy-2-cyclopenten-1-yl)amino)methyl)-7-deazaguanosine). The sequence is that of Queuine tRNA-ribosyltransferase from Actinobacillus pleuropneumoniae serotype 3 (strain JL03).